We begin with the raw amino-acid sequence, 199 residues long: NAD(P)H dehydrogenase (quinone) (199 aa).

The region spanning 4–190 (VLVLYYSAYG…DGARFQGKRV (187 aa)) is the Flavodoxin-like domain. Residues 10–15 (SAYGHM) and 78–80 (TRY) each bind FMN. NAD(+) is bound at residue tyrosine 12. Tryptophan 98 lines the substrate pocket. FMN is bound by residues 113–119 (STATQHG) and histidine 134. The disordered stretch occupies residues 157–185 (GGAPYGMTTTADGDGSRQPSEQELDGARF). Residues 163-177 (MTTTADGDGSRQPSE) are compositionally biased toward polar residues.

This sequence belongs to the WrbA family. It depends on FMN as a cofactor.

It carries out the reaction a quinone + NADH + H(+) = a quinol + NAD(+). The catalysed reaction is a quinone + NADPH + H(+) = a quinol + NADP(+). This is NAD(P)H dehydrogenase (quinone) from Brucella anthropi (strain ATCC 49188 / DSM 6882 / CCUG 24695 / JCM 21032 / LMG 3331 / NBRC 15819 / NCTC 12168 / Alc 37) (Ochrobactrum anthropi).